The following is a 47-amino-acid chain: Defensin-like protein 2 (47 aa).

4 disulfide bridges follow: Cys5–Cys47, Cys16–Cys36, Cys22–Cys43, and Cys26–Cys45.

Belongs to the DEFL family.

In terms of biological role, fabatins have antibacterial activity against Gram-positive and Gram-negative bacteria. High activity against P.aeruginosa. No activity against S.cerevisiae and C.albicans. This chain is Defensin-like protein 2, found in Vicia faba (Broad bean).